We begin with the raw amino-acid sequence, 259 residues long: Acyl-[acyl-carrier-protein]--UDP-N-acetylglucosamine O-acyltransferase (259 aa).

The protein belongs to the transferase hexapeptide repeat family. LpxA subfamily. Homotrimer.

It localises to the cytoplasm. It carries out the reaction a (3R)-hydroxyacyl-[ACP] + UDP-N-acetyl-alpha-D-glucosamine = a UDP-3-O-[(3R)-3-hydroxyacyl]-N-acetyl-alpha-D-glucosamine + holo-[ACP]. It participates in glycolipid biosynthesis; lipid IV(A) biosynthesis; lipid IV(A) from (3R)-3-hydroxytetradecanoyl-[acyl-carrier-protein] and UDP-N-acetyl-alpha-D-glucosamine: step 1/6. In terms of biological role, involved in the biosynthesis of lipid A, a phosphorylated glycolipid that anchors the lipopolysaccharide to the outer membrane of the cell. This is Acyl-[acyl-carrier-protein]--UDP-N-acetylglucosamine O-acyltransferase from Nautilia profundicola (strain ATCC BAA-1463 / DSM 18972 / AmH).